The following is a 302-amino-acid chain: NAD kinase 2 (302 aa).

The active-site Proton acceptor is the Asp-78. NAD(+) contacts are provided by residues 78-79 (DG), 152-153 (NE), Asp-182, and 193-198 (TAYSLS).

The protein belongs to the NAD kinase family. The cofactor is a divalent metal cation.

The protein localises to the cytoplasm. It catalyses the reaction NAD(+) + ATP = ADP + NADP(+) + H(+). Functionally, involved in the regulation of the intracellular balance of NAD and NADP, and is a key enzyme in the biosynthesis of NADP. Catalyzes specifically the phosphorylation on 2'-hydroxyl of the adenosine moiety of NAD to yield NADP. The protein is NAD kinase 2 of Prochlorococcus marinus (strain NATL2A).